The sequence spans 625 residues: Mesothelin (625 aa).

An N-terminal signal peptide occupies residues 1–35; sequence MALPTAQPLLGSCGSPICSRSFLLLLLSLGWLPLL. Ser-202 is modified (phosphoserine). An intrachain disulfide couples Cys-304 to Cys-328. Asn-390, Asn-488, and Asn-517 each carry an N-linked (GlcNAc...) asparagine glycan. The GPI-anchor amidated serine moiety is linked to residue Ser-600. The propeptide at 601–625 is removed in mature form; sequence SGAPLLGPGFVFAWIPALLSALRLS.

Belongs to the mesothelin family. In terms of assembly, interacts with MUC16. Proteolytically cleaved by a furin-like convertase to generate megakaryocyte-potentiating factor (MPF), and the cleaved form of mesothelin. As to expression, specifically expressed in lung. Overexpressed in hereditary renal carcinoma developed by Eker rats.

Its subcellular location is the cell membrane. It is found in the golgi apparatus. It localises to the secreted. Functionally, membrane-anchored forms may play a role in cellular adhesion. Its function is as follows. Megakaryocyte-potentiating factor (MPF) may potentiate megakaryocyte colony formation. This is Mesothelin (Msln) from Rattus norvegicus (Rat).